The sequence spans 228 residues: Urease accessory protein UreF (228 aa).

It belongs to the UreF family. UreD, UreF and UreG form a complex that acts as a GTP-hydrolysis-dependent molecular chaperone, activating the urease apoprotein by helping to assemble the nickel containing metallocenter of UreC. The UreE protein probably delivers the nickel.

The protein localises to the cytoplasm. Required for maturation of urease via the functional incorporation of the urease nickel metallocenter. The protein is Urease accessory protein UreF of Prochlorococcus marinus subsp. pastoris (strain CCMP1986 / NIES-2087 / MED4).